The primary structure comprises 321 residues: Lambda-crystallin homolog (321 aa).

Serine 6 is modified (phosphoserine). Residues 19-20 (LI), aspartate 39, glutamate 100, and lysine 105 contribute to the NAD(+) site.

The protein belongs to the 3-hydroxyacyl-CoA dehydrogenase family. In terms of assembly, homodimer.

It is found in the cytoplasm. The catalysed reaction is L-gulonate + NAD(+) = 3-dehydro-L-gulonate + NADH + H(+). Its activity is regulated as follows. Inhibited by malonate. Functionally, has high L-gulonate 3-dehydrogenase activity. It also exhibits low dehydrogenase activity toward L-3-hydroxybutyrate (HBA) and L-threonate. The sequence is that of Lambda-crystallin homolog (CRYL1) from Bos taurus (Bovine).